The sequence spans 573 residues: Sulfite reductase [NADPH] hemoprotein beta-component (573 aa).

4 residues coordinate [4Fe-4S] cluster: Cys438, Cys444, Cys483, and Cys487. Position 487 (Cys487) interacts with siroheme.

Belongs to the nitrite and sulfite reductase 4Fe-4S domain family. In terms of assembly, alpha(8)-beta(8). The alpha component is a flavoprotein, the beta component is a hemoprotein. It depends on siroheme as a cofactor. [4Fe-4S] cluster serves as cofactor.

The catalysed reaction is hydrogen sulfide + 3 NADP(+) + 3 H2O = sulfite + 3 NADPH + 4 H(+). Its pathway is sulfur metabolism; hydrogen sulfide biosynthesis; hydrogen sulfide from sulfite (NADPH route): step 1/1. Functionally, component of the sulfite reductase complex that catalyzes the 6-electron reduction of sulfite to sulfide. This is one of several activities required for the biosynthesis of L-cysteine from sulfate. In Shouchella clausii (strain KSM-K16) (Alkalihalobacillus clausii), this protein is Sulfite reductase [NADPH] hemoprotein beta-component.